A 427-amino-acid chain; its full sequence is Trigger factor (427 aa).

In terms of domain architecture, PPIase FKBP-type spans 163–248 (GDTVVIDFVG…VNEVKAKELP (86 aa)).

The protein belongs to the FKBP-type PPIase family. Tig subfamily.

The protein resides in the cytoplasm. It carries out the reaction [protein]-peptidylproline (omega=180) = [protein]-peptidylproline (omega=0). Involved in protein export. Acts as a chaperone by maintaining the newly synthesized protein in an open conformation. Functions as a peptidyl-prolyl cis-trans isomerase. The polypeptide is Trigger factor (Lactococcus lactis subsp. cremoris (strain SK11)).